We begin with the raw amino-acid sequence, 278 residues long: Thiazole synthase (278 aa).

The active-site Schiff-base intermediate with DXP is the K107. Residues G168, 194-195 (AG), and 216-217 (AS) contribute to the 1-deoxy-D-xylulose 5-phosphate site.

Belongs to the ThiG family. As to quaternary structure, homotetramer. Forms heterodimers with either ThiH or ThiS.

The protein localises to the cytoplasm. The enzyme catalyses [ThiS sulfur-carrier protein]-C-terminal-Gly-aminoethanethioate + 2-iminoacetate + 1-deoxy-D-xylulose 5-phosphate = [ThiS sulfur-carrier protein]-C-terminal Gly-Gly + 2-[(2R,5Z)-2-carboxy-4-methylthiazol-5(2H)-ylidene]ethyl phosphate + 2 H2O + H(+). It functions in the pathway cofactor biosynthesis; thiamine diphosphate biosynthesis. In terms of biological role, catalyzes the rearrangement of 1-deoxy-D-xylulose 5-phosphate (DXP) to produce the thiazole phosphate moiety of thiamine. Sulfur is provided by the thiocarboxylate moiety of the carrier protein ThiS. In vitro, sulfur can be provided by H(2)S. The chain is Thiazole synthase from Corynebacterium urealyticum (strain ATCC 43042 / DSM 7109).